The chain runs to 1025 residues: MKFFALFIYRPVATILLSVAITLCGILGFRMLPVAPLPQVDFPVIMVSASLPGASPETMASSVATPLERSLGRIAGVSEMTSSSSLGSTRIILQFDFDRDINGAARDVQAAINAAQSLLPSGMPSRPTYRKANPSDAPIMILTLTSDTYSQGELYDFASTQLAPTISQIDGVGDVDVGGSSLPAVRVGLNPQALFNQGVSLDDVRTAISNANVRKPQGALEDGTHRWQIQTNDELKTAAEYQPLIIHYNNGGAVRLGDVATVTDSVQDVRNAGMTNAKPAILLMIRKLPEANIIQTVDSIRAKLPELQETIPAAIDLQIAQDRSPTIRASLEEVEQTLIISVALVILVVFLFLRSGRATIIPAVAVPVSLIGTFAAMYLCGFSLNNLSLMALTIATGFVVDDAIVVLENIARHLEAGMKPLQAALQGTREVGFTVLSMSLSLVAVFLPLLLMGGLPGRLLREFAVTLSVAIGISLLVSLTLTPMMCGWMLKASKPREQKRLRGFGRMLVALQQGYGKSLKWVLNHTRLVGMVLLGTIALNIWLYISIPKTFFPEQDTGVLMGGIQADQSISFQAMRGKLQDFMKIIRDDPAVDNVTGFTGGSRVNSGMMFITLKPRDERSETAQQIIDRLRVKLAKEPGANLFLMAVQDIRVGGRQSNASYQYTLLSDDLAALREWEPKIRKKLATLPELADVNSDQQDNGAEMNLVYDRDTMARLGIDVQAANSLLNNAFGQRQISTIYQPMNQYKVVMEVDPRYTQDISALEKMFVINNEGKAIPLSYFAKWQPANAPLSVNHQGLSAASTISFNLPTGKSLSDASAAIDRAMTQLGVPSTVRGSFAGTAQVFQETMNSQVILIIAAIATVYIVLGILYESYVHPLTILSTLPSAGVGALLALELFNAPFSLIALIGIMLLIGIVKKNAIMMVDFALEAQRHGNLTPQEAIFQACLLRFRPIMMTTLAALFGALPLVLSGGDGSELRQPLGITIVGGLVMSQLLTLYTTPVVYLFFDRLRLRFSRKSKQTVTE.

A run of 12 helical transmembrane segments spans residues 3 to 23 (FFAL…AITL), 333 to 353 (EVEQ…FLFL), 360 to 380 (IIPA…MYLC), 387 to 407 (LSLM…IVVL), 431 to 451 (VGFT…PLLL), 463 to 483 (FAVT…TLTP), 528 to 548 (LVGM…ISIP), 853 to 873 (VILI…LYES), 875 to 895 (VHPL…LLAL), 897 to 917 (LFNA…IGIV), 953 to 973 (PIMM…LSGG), and 984 to 1004 (ITIV…TPVV).

Belongs to the resistance-nodulation-cell division (RND) (TC 2.A.6) family. MdtC subfamily. Part of a tripartite efflux system composed of MdtA, MdtB and MdtC. MdtC forms a heteromultimer with MdtB.

The protein localises to the cell inner membrane. Functionally, the MdtABC tripartite complex confers resistance against novobiocin and deoxycholate. The polypeptide is Multidrug resistance protein MdtC (Escherichia coli O157:H7 (strain EC4115 / EHEC)).